A 927-amino-acid polypeptide reads, in one-letter code: MENYGWNYPYYPYRPPRPNPPYPAPPHHHGSMSHSGPLDHHHPPMSYYASFDYQHQPPPPYPPVSYYASFSSHSDLSYSGRLDSSGHGFTSTASPHSPGMHIVPFGKASLKVLLLHGNLDIWVSCANNLPNLDLFHKTLGVVFGGMTNMIEGQLSKKITSDPYVSISVAGAVIGRTYVISNSENPVWQQHFYVPVAHHAAEVHFVVKDSDAVGSQLIGIVTIPVEQIYSGARIEGTYSIRDSNGKPCKPGATLSLSIQYTSMNKLSVYHSGVGAGPYYQGVPGTYFPLREGGSVTLYQDAHVPEGMLPGIKLGNGMCYEHGKCWHDMFHAICQARRLIYITGWSVWHNVRLVRDKEDPSSECRLGELLRSKSQEGVRVLLLVWDDPTSQNILGYMTDGVMGTHDEETRRFFKDSSVQVLLCPRNAGKRHSWVKQREVGTIYTHHQKNLIVDADAGGNRRKIVAFVGGLDLCDGRYDTPQHPLFRTLQTDHNGDYHNPTFTGNVSGCPREPWHDLHSKIDGPAAYDVLTNFEERWLKAAKPHRINKLKTSYDDALLRIDRIPDILRVLDAPTVSANDPEAWHVQIFRSIDSNSVKGFPKDPKYATSKNLVCGKNVLIDMSIHTAYVKAIRAAQHFIYIENQYFIGSSYDWNAHKDIGANNLIPMEIALKIADKIRAKERFAAYIVIPMWPEGVPTGAATQRILYWQHKTMQMMYGTIYNALVEAGLEDEYSPQDYLNFFCLGNREMVNGNNESGTGSASNENTPQGLCRKSRRFMIYVHSKGMVVDDEYVVIGSANINQRSMEGTRDTEIAMGAYQPQHTWARRQSGPRGQIYGYRMSLWAEHMALLDDCFVEPESLGCVRKVRTVAEENWEQFRSEEVSEMRGHLMKYPVEVDRKGKVRPLPGSEEFPDVGGNVVGSFLAIQENLTI.

The region spanning Pro104 to Tyr237 is the C2 domain. Asp299 provides a ligand contact to Ca(2+). The PLD phosphodiesterase 1 domain maps to Thr439–Arg474. Residues His444, Lys446, and Asp451 contribute to the active site. A 1,2-diacyl-sn-glycero-3-phosphate is bound at residue His444. Ca(2+) contacts are provided by His480 and His512. Residues Gln640 and His778 each contribute to the a 1,2-diacyl-sn-glycero-3-phosphate site. The PLD phosphodiesterase 2 domain occupies Phe773–Ser800. Residues His778, Lys780, and Asp785 contribute to the active site. Glu841 contributes to the Ca(2+) binding site.

This sequence belongs to the phospholipase D family. C2-PLD subfamily. Ca(2+) is required as a cofactor. As to expression, expressed in stems, and to a lower amount in leaves, flowers and siliques.

The protein resides in the cytoplasm. The protein localises to the membrane. The catalysed reaction is a 1,2-diacyl-sn-glycero-3-phosphocholine + H2O = a 1,2-diacyl-sn-glycero-3-phosphate + choline + H(+). Inhibited by neomycin. Its function is as follows. Hydrolyzes glycerol-phospholipids at the terminal phosphodiesteric bond to generate phosphatidic acids (PA). Plays an important role in various cellular processes, including phytohormone action, vesicular trafficking, secretion, cytoskeletal arrangement, meiosis, tumor promotion, pathogenesis, membrane deterioration and senescence. Can use phosphatidylserine or N-acylphosphatidylethanolamine as substrates. This Arabidopsis thaliana (Mouse-ear cress) protein is Phospholipase D beta 2.